The chain runs to 763 residues: G protein-regulated inducer of neurite outgrowth 3 (763 aa).

Disordered regions lie at residues M1 to V48, Q65 to L111, and E192 to C268. Residues E27–G44 show a composition bias toward polar residues. Residues K93 to K104 are compositionally biased toward basic and acidic residues. Residues E237–A250 show a composition bias toward polar residues. Residues S323 and S359 each carry the phosphoserine modification. Disordered regions lie at residues T420 to Q452, N471 to G624, and V711 to H737. Positions K437–D450 are enriched in polar residues. Composition is skewed to basic and acidic residues over residues R480 to S496 and P518 to A539. Residues S593–G609 are compositionally biased toward low complexity.

Functionally, may be involved in neurite outgrowth. The chain is G protein-regulated inducer of neurite outgrowth 3 (Gprin3) from Mus musculus (Mouse).